A 478-amino-acid polypeptide reads, in one-letter code: Proline--tRNA ligase (478 aa).

Belongs to the class-II aminoacyl-tRNA synthetase family. ProS type 3 subfamily. As to quaternary structure, homodimer.

It localises to the cytoplasm. The catalysed reaction is tRNA(Pro) + L-proline + ATP = L-prolyl-tRNA(Pro) + AMP + diphosphate. Catalyzes the attachment of proline to tRNA(Pro) in a two-step reaction: proline is first activated by ATP to form Pro-AMP and then transferred to the acceptor end of tRNA(Pro). The sequence is that of Proline--tRNA ligase from Methanoregula boonei (strain DSM 21154 / JCM 14090 / 6A8).